The sequence spans 342 residues: Thiosulfate/3-mercaptopyruvate sulfurtransferase 2 (342 aa).

Rhodanese domains follow at residues 56 to 173 (GDAD…DVES) and 224 to 338 (EDKT…LPIV). Cysteine 298 functions as the Cysteine persulfide intermediate in the catalytic mechanism.

Expressed in roots, rosette and cauline leaves, stems, flowers and siliques.

It is found in the cytoplasm. It catalyses the reaction thiosulfate + hydrogen cyanide = thiocyanate + sulfite + 2 H(+). The enzyme catalyses 2-oxo-3-sulfanylpropanoate + [thioredoxin]-dithiol = [thioredoxin]-disulfide + hydrogen sulfide + pyruvate + H(+). Its function is as follows. Catalyzes the transfer of a sulfur ion from a donor to cyanide or to other thiol compounds. Substrate preference is 3-mercaptopyruvate &gt; thiosulfate. Involved in embryo and seed development. The polypeptide is Thiosulfate/3-mercaptopyruvate sulfurtransferase 2 (STR2) (Arabidopsis thaliana (Mouse-ear cress)).